Here is a 91-residue protein sequence, read N- to C-terminus: Small ribosomal subunit protein uS15 (91 aa).

The protein belongs to the universal ribosomal protein uS15 family. As to quaternary structure, part of the 30S ribosomal subunit. Forms a bridge to the 50S subunit in the 70S ribosome, contacting the 23S rRNA.

Its function is as follows. One of the primary rRNA binding proteins, it binds directly to 16S rRNA where it helps nucleate assembly of the platform of the 30S subunit by binding and bridging several RNA helices of the 16S rRNA. Functionally, forms an intersubunit bridge (bridge B4) with the 23S rRNA of the 50S subunit in the ribosome. The polypeptide is Small ribosomal subunit protein uS15 (Deinococcus geothermalis (strain DSM 11300 / CIP 105573 / AG-3a)).